Reading from the N-terminus, the 134-residue chain is Photosystem II lipoprotein Psb27 (134 aa).

The signal sequence occupies residues 1-24 (MSFLKNQLSRLLALILVVAIGLTA). Residue Cys25 is the site of N-palmitoyl cysteine attachment. Cys25 carries S-diacylglycerol cysteine lipidation.

It belongs to the Psb27 family. Monomer. Forms a complex with a monomeric, partially assembled PSII. This is probably the complex in which D1 is assembled and/or replaced. Present in 6-10% of PSII complexes; mostly in monomeric PSII. These PSII do not evolve oxygen, do not have an assembled calcium-manganese-oxide cluster. Psb27-containing PSII seem to be assembly intermediates; a wild-type strain includes the intrinsic membrane proteins, Psb27, Pbs28, substoichiometric amounts of PsbO and PsbQ but no PsbU or PsbV, while a ctpA deletion mutant includes the intrinsic membrane proteins (D1 as precursor), Psb27, a very low amount of PsbO and PsbQ, but no PsbU or PsbV. Small amounts of Psb27 interact with the lumenal domain of CP43 (psbC) in wild-type and a ctpA mutant. A small amount can also be detected in monomeric and trimeric photosystem I (PSI), possibly via association with PsaB.

Its subcellular location is the cellular thylakoid membrane. Its function is as follows. Plays a role in the repair and/or biogenesis of the calcium-manganese-oxide cluster on the lumenal face of the thylakoid membrane. Photosystem II (PSII) complexes containing this protein are monomeric, are assembly intermediates lacking the calcium-manganese-oxide cluster and miss some of the lumenal subunits. Probably blocks binding of some of the small lumenal subunits. This is Photosystem II lipoprotein Psb27 from Synechocystis sp. (strain ATCC 27184 / PCC 6803 / Kazusa).